A 62-amino-acid polypeptide reads, in one-letter code: Metallothionein (62 aa).

Residue Met1 is modified to N-acetylmethionine. The tract at residues 1 to 30 is beta; it reads MDPQDCKCETGASCSCGTTCSCSNCKCTSC. A divalent metal cation contacts are provided by Cys6, Cys8, Cys14, Cys16, Cys20, Cys22, Cys25, Cys27, Cys30, Cys34, Cys35, Cys37, Cys38, Cys42, Cys45, Cys49, Cys51, Cys58, Cys60, and Cys61. The tract at residues 31-62 is alpha; the sequence is KKSCCSCCPAECSKCSQGCHCEKGSKKCSCCN.

The protein belongs to the metallothionein superfamily. Type 1 family.

Its function is as follows. Metallothioneins have a high content of cysteine residues that bind various heavy metals. The polypeptide is Metallothionein (mt-a) (Xenopus laevis (African clawed frog)).